The primary structure comprises 35 residues: Cupiennin-2e (35 aa).

The residue at position 35 (Glu-35) is a Glutamic acid 1-amide.

As to expression, expressed by the venom gland.

It localises to the secreted. The sequence is that of Cupiennin-2e from Cupiennius salei (American wandering spider).